The sequence spans 298 residues: Cyclin-dependent kinase 2 homolog (298 aa).

The Protein kinase domain maps to 4-284; the sequence is YHKMEKIGEG…AKEALKHDYF (281 aa). ATP is bound by residues 10 to 18 and Lys-32; that span reads IGEGTYGVV. At Thr-14 the chain carries Phosphothreonine. Tyr-15 is modified (phosphotyrosine). Asp-125 acts as the Proton acceptor in catalysis. Residue Thr-158 is modified to Phosphothreonine.

It belongs to the protein kinase superfamily. CMGC Ser/Thr protein kinase family. CDC2/CDKX subfamily. As to quaternary structure, may form a complex composed of at least the catalytic subunit CRK2 and a cyclin. Mg(2+) is required as a cofactor.

The protein localises to the cytoplasm. It carries out the reaction L-seryl-[protein] + ATP = O-phospho-L-seryl-[protein] + ADP + H(+). It catalyses the reaction L-threonyl-[protein] + ATP = O-phospho-L-threonyl-[protein] + ADP + H(+). The enzyme catalyses [DNA-directed RNA polymerase] + ATP = phospho-[DNA-directed RNA polymerase] + ADP + H(+). Phosphorylation at Thr-14 or Tyr-15 inactivates the enzyme, while phosphorylation at Thr-158 activates it. In terms of biological role, serine/threonine-protein kinase. Involved in the control of the cell cycle. Required for entry into S-phase and mitosis. Probable component of the kinase complex that phosphorylates the repetitive C-terminus of RNA polymerase II. In Theileria annulata, this protein is Cyclin-dependent kinase 2 homolog.